Consider the following 144-residue polypeptide: 3-hydroxyacyl-[acyl-carrier-protein] dehydratase FabZ (144 aa).

Residue H51 is part of the active site.

The protein belongs to the thioester dehydratase family. FabZ subfamily.

It localises to the cytoplasm. It carries out the reaction a (3R)-hydroxyacyl-[ACP] = a (2E)-enoyl-[ACP] + H2O. Its function is as follows. Involved in unsaturated fatty acids biosynthesis. Catalyzes the dehydration of short chain beta-hydroxyacyl-ACPs and long chain saturated and unsaturated beta-hydroxyacyl-ACPs. The chain is 3-hydroxyacyl-[acyl-carrier-protein] dehydratase FabZ from Clostridium botulinum (strain 657 / Type Ba4).